Consider the following 394-residue polypeptide: Phosphopentomutase (394 aa).

6 residues coordinate Mn(2+): Asp15, Asp288, His293, Asp329, His330, and His341.

Belongs to the phosphopentomutase family. Mn(2+) is required as a cofactor.

Its subcellular location is the cytoplasm. It catalyses the reaction 2-deoxy-alpha-D-ribose 1-phosphate = 2-deoxy-D-ribose 5-phosphate. The catalysed reaction is alpha-D-ribose 1-phosphate = D-ribose 5-phosphate. Its pathway is carbohydrate degradation; 2-deoxy-D-ribose 1-phosphate degradation; D-glyceraldehyde 3-phosphate and acetaldehyde from 2-deoxy-alpha-D-ribose 1-phosphate: step 1/2. In terms of biological role, isomerase that catalyzes the conversion of deoxy-ribose 1-phosphate (dRib-1-P) and ribose 1-phosphate (Rib-1-P) to deoxy-ribose 5-phosphate (dRib-5-P) and ribose 5-phosphate (Rib-5-P), respectively. The sequence is that of Phosphopentomutase from Bacillus pumilus (strain SAFR-032).